We begin with the raw amino-acid sequence, 186 residues long: ADP-ribosylation factor-like protein 8A (186 aa).

Residues 1-19 (MIALFNKLLDWFKALFWKE) constitute an intramembrane region (note=Mediates targeting to membranes). Residues 29–35 (QYSGKTT), 71–75 (DIGGQ), and 130–133 (NKRD) each bind GTP.

It belongs to the small GTPase superfamily. Arf family. In terms of assembly, interacts with PLEKHM1. When GTP-bound, interacts with RUFY3 and RUFY4, but not with RUFY1, nor RUFY2.

The protein localises to the late endosome membrane. The protein resides in the lysosome membrane. It localises to the cytoplasm. It is found in the cytoskeleton. Its subcellular location is the spindle. The protein localises to the cell projection. The protein resides in the axon. It localises to the synapse. Its function is as follows. Plays a role in lysosomes motility. In neurons, mediates the anterograde axonal long-range transport of presynaptic lysosome-related vesicles required for presynaptic biogenesis and synaptic function. May play a role in chromosome segregation. This Mus musculus (Mouse) protein is ADP-ribosylation factor-like protein 8A (Arl8a).